We begin with the raw amino-acid sequence, 284 residues long: Ubiquinone biosynthesis protein COQ4, mitochondrial (284 aa).

Zn(2+) contacts are provided by histidine 165, aspartate 166, histidine 169, and glutamate 181.

This sequence belongs to the COQ4 family. As to quaternary structure, component of a multi-subunit COQ enzyme complex, composed of at least COQ3, COQ4, COQ5, COQ6, COQ7 and COQ9. Zn(2+) serves as cofactor.

The protein resides in the mitochondrion inner membrane. It catalyses the reaction a 4-hydroxy-3-methoxy-5-(all-trans-polyprenyl)benzoate + H(+) = a 2-methoxy-6-(all-trans-polyprenyl)phenol + CO2. Its pathway is cofactor biosynthesis; ubiquinone biosynthesis. Lyase that catalyzes the C1-decarboxylation of 4-hydroxy-3-methoxy-5-(all-trans-polyprenyl)benzoic acid into 2-methoxy-6-(all-trans-polyprenyl)phenol during ubiquinone biosynthesis. This chain is Ubiquinone biosynthesis protein COQ4, mitochondrial, found in Blastomyces gilchristii (strain SLH14081) (Blastomyces dermatitidis).